The chain runs to 358 residues: MLKTPLYESHIAANAKMIDFSGWSMPINYGSQIQEHNNVREDCGIFDVSHMLAVDIQGSEAEKFLRYLLANDVAKLQENKAQYGCMLNHDAGIVDDLITYKVTDEHFRIVVNAGNRESDVAWFNQNAQNFDVAITPQTDLAIVAVQGPKAVAVIKRVVTKEIAAEIEALLPFSFKFFSKWMVARTGYTGEDGFEVILPATQVKKFWDSLLENGAQPAGLGARDTLRLEAGMHLYGADMDTSTTPLERGLGWSVDLSDEHRDFIGKKAYLAKKAQGVDTKWVGVVLKTKGVLRAGQEIDFDNGEKGYITSGSFSPTLKVAIGLAYVPKQADNPVVNIRGKELEVELVKPKFVKNGKSLI.

This sequence belongs to the GcvT family. In terms of assembly, the glycine cleavage system is composed of four proteins: P, T, L and H.

The catalysed reaction is N(6)-[(R)-S(8)-aminomethyldihydrolipoyl]-L-lysyl-[protein] + (6S)-5,6,7,8-tetrahydrofolate = N(6)-[(R)-dihydrolipoyl]-L-lysyl-[protein] + (6R)-5,10-methylene-5,6,7,8-tetrahydrofolate + NH4(+). The glycine cleavage system catalyzes the degradation of glycine. The sequence is that of Aminomethyltransferase from Francisella tularensis subsp. holarctica (strain FTNF002-00 / FTA).